We begin with the raw amino-acid sequence, 304 residues long: Ribonuclease Z (304 aa).

Zn(2+) contacts are provided by H63, H65, D67, H68, H143, D213, and H271. Residue D67 is the Proton acceptor of the active site.

It belongs to the RNase Z family. In terms of assembly, homodimer. Zn(2+) serves as cofactor.

The enzyme catalyses Endonucleolytic cleavage of RNA, removing extra 3' nucleotides from tRNA precursor, generating 3' termini of tRNAs. A 3'-hydroxy group is left at the tRNA terminus and a 5'-phosphoryl group is left at the trailer molecule.. Functionally, zinc phosphodiesterase, which displays some tRNA 3'-processing endonuclease activity. Probably involved in tRNA maturation, by removing a 3'-trailer from precursor tRNA. In Bacteroides fragilis (strain ATCC 25285 / DSM 2151 / CCUG 4856 / JCM 11019 / LMG 10263 / NCTC 9343 / Onslow / VPI 2553 / EN-2), this protein is Ribonuclease Z.